The primary structure comprises 391 residues: Phosphoglycerate kinase (391 aa).

Substrate contacts are provided by residues 21–23 (DLN), Arg36, 59–62 (HLGR), Arg113, and Arg146. Residues Lys197, Glu319, and 345–348 (GGDT) contribute to the ATP site.

Belongs to the phosphoglycerate kinase family. Monomer.

It is found in the cytoplasm. It carries out the reaction (2R)-3-phosphoglycerate + ATP = (2R)-3-phospho-glyceroyl phosphate + ADP. The protein operates within carbohydrate degradation; glycolysis; pyruvate from D-glyceraldehyde 3-phosphate: step 2/5. This is Phosphoglycerate kinase from Xanthomonas oryzae pv. oryzae (strain PXO99A).